The following is a 1345-amino-acid chain: DNA-directed RNA polymerase subunit beta (1345 aa).

This sequence belongs to the RNA polymerase beta chain family. The RNAP catalytic core consists of 2 alpha, 1 beta, 1 beta' and 1 omega subunit. When a sigma factor is associated with the core the holoenzyme is formed, which can initiate transcription.

It carries out the reaction RNA(n) + a ribonucleoside 5'-triphosphate = RNA(n+1) + diphosphate. DNA-dependent RNA polymerase catalyzes the transcription of DNA into RNA using the four ribonucleoside triphosphates as substrates. The polypeptide is DNA-directed RNA polymerase subunit beta (Shewanella oneidensis (strain ATCC 700550 / JCM 31522 / CIP 106686 / LMG 19005 / NCIMB 14063 / MR-1)).